The sequence spans 56 residues: Large ribosomal subunit protein eL37 (56 aa).

Residues cysteine 19, cysteine 22, cysteine 34, and cysteine 37 each contribute to the Zn(2+) site. A C4-type zinc finger spans residues cysteine 19–cysteine 37.

It belongs to the eukaryotic ribosomal protein eL37 family. Zn(2+) is required as a cofactor.

In terms of biological role, binds to the 23S rRNA. The protein is Large ribosomal subunit protein eL37 of Methanothrix thermoacetophila (strain DSM 6194 / JCM 14653 / NBRC 101360 / PT) (Methanosaeta thermophila).